Reading from the N-terminus, the 360-residue chain is Casein kinase II subunit alpha (360 aa).

One can recognise a Protein kinase domain in the interval 38–323 (YQLVRKLGRG…AQEAMGHEYF (286 aa)). Residues 44-52 (LGRGKYSEV) and K67 contribute to the ATP site. D155 serves as the catalytic Proton acceptor. The interval 334-360 (NGTEQADGQGASNSASSQSSDAKIDGA) is disordered. Over residues 338–354 (QADGQGASNSASSQSSD) the composition is skewed to low complexity.

It belongs to the protein kinase superfamily. Ser/Thr protein kinase family. CK2 subfamily. Tetramer of two alpha and two beta chains. As to expression, expressed in a subset of the adult male sensory neurons: CEM head neurons, ray RnB neurons, and hook HOB tail neurons.

Its subcellular location is the cell projection. The protein localises to the axon. The protein resides in the cilium. It is found in the dendrite. It localises to the perikaryon. It catalyses the reaction L-seryl-[protein] + ATP = O-phospho-L-seryl-[protein] + ADP + H(+). The catalysed reaction is L-threonyl-[protein] + ATP = O-phospho-L-threonyl-[protein] + ADP + H(+). Functionally, casein kinases are operationally defined by their preferential utilization of acidic proteins such as caseins as substrates. The alpha chain contains the catalytic site. May participate in Wnt signaling. Modulates two aspects of male mating behavior; response to hermaphrodite contact and vulval location, acting in the same pathway as lov-1 and pkd-2. This is Casein kinase II subunit alpha (kin-3) from Caenorhabditis elegans.